A 468-amino-acid chain; its full sequence is MSSGKIAQVVGPVVDVMFASGDKLPEINNALIVYKDSDKKQKIVLEVALELGDGMVRTIAMESTDGLTRGLEVLDTGRAISVPVGKETLGRVFNVLGETIDLEEPFAEDVDRQPIHKKAPSFDELSTSSEILETGIKVIDLLAPYLKGGKVGLFGGAGVGKTVLIQELIHNIAQEHGGISVFTGVGERTREGNDLYWEMKESGVIEKTAMVFGQMNEPPGARMRVALTGLTIAEYFRDVEGQDVLLFIDNIFRFTQAGSEVSALLGRMPSAVGYQPTLATEMGQLQERITSTQKGSVTSIQAIYVPADDYTDPAPATAFAHLDSTTNLERKLTQMGIYPAVDPLASSSRALSPEIVGEEHYAVATEVQRVLQRYRELQDIIAILGMDELSDEEKTLVGRARRIQFFLSQNFNVAEQFTGLPGSYVPVADTVRGFKEILEGKYDELPEDAFRSVGPIEDVIKKAEKMGF.

155 to 162 (GGAGVGKT) provides a ligand contact to ATP.

The protein belongs to the ATPase alpha/beta chains family. As to quaternary structure, F-type ATPases have 2 components, CF(1) - the catalytic core - and CF(0) - the membrane proton channel. CF(1) has five subunits: alpha(3), beta(3), gamma(1), delta(1), epsilon(1). CF(0) has three main subunits: a(1), b(2) and c(9-12). The alpha and beta chains form an alternating ring which encloses part of the gamma chain. CF(1) is attached to CF(0) by a central stalk formed by the gamma and epsilon chains, while a peripheral stalk is formed by the delta and b chains.

It is found in the cell membrane. It carries out the reaction ATP + H2O + 4 H(+)(in) = ADP + phosphate + 5 H(+)(out). In terms of biological role, produces ATP from ADP in the presence of a proton gradient across the membrane. The catalytic sites are hosted primarily by the beta subunits. The sequence is that of ATP synthase subunit beta from Streptococcus pyogenes serotype M1.